A 271-amino-acid polypeptide reads, in one-letter code: Elongation factor Ts (271 aa).

Residues 76-79 form an involved in Mg(2+) ion dislocation from EF-Tu region; sequence TDFV.

Belongs to the EF-Ts family.

Its subcellular location is the cytoplasm. Functionally, associates with the EF-Tu.GDP complex and induces the exchange of GDP to GTP. It remains bound to the aminoacyl-tRNA.EF-Tu.GTP complex up to the GTP hydrolysis stage on the ribosome. The sequence is that of Elongation factor Ts from Mycolicibacterium vanbaalenii (strain DSM 7251 / JCM 13017 / BCRC 16820 / KCTC 9966 / NRRL B-24157 / PYR-1) (Mycobacterium vanbaalenii).